We begin with the raw amino-acid sequence, 119 residues long: MARVKRGVQARRRHKKILTLAKGYYNARRKVFRVAKQAVIKAQQYAYIGRKQKKRNFRSLWITRINAAARINGLSYSRFMNGLLKAGITLDRKVLADIAVHDAAGFAALAEKAKGALAA.

The protein belongs to the bacterial ribosomal protein bL20 family.

Binds directly to 23S ribosomal RNA and is necessary for the in vitro assembly process of the 50S ribosomal subunit. It is not involved in the protein synthesizing functions of that subunit. The protein is Large ribosomal subunit protein bL20 of Xanthomonas oryzae pv. oryzae (strain KACC10331 / KXO85).